The primary structure comprises 106 residues: Iron-sulfur cluster assembly protein CyaY (106 aa).

It belongs to the frataxin family.

In terms of biological role, involved in iron-sulfur (Fe-S) cluster assembly. May act as a regulator of Fe-S biogenesis. This is Iron-sulfur cluster assembly protein CyaY from Pectobacterium carotovorum subsp. carotovorum (strain PC1).